The chain runs to 1031 residues: Toll-like receptor 9 (1031 aa).

Residues methionine 1–alanine 25 form the signal peptide. The Extracellular segment spans residues glutamine 26–aspartate 817. A disulfide bond links cysteine 35 and cysteine 45. Tryptophan 47–lysine 51 serves as a coordination point for DNA. LRR repeat units follow at residues arginine 62–histidine 85, serine 87–cysteine 110, valine 122–serine 147, leucine 150–leucine 166, histidine 167–valine 190, leucine 198–serine 221, glutamate 223–asparagine 242, leucine 243–cysteine 268, leucine 283–alanine 306, glycine 308–glycine 332, leucine 333–leucine 356, leucine 363–serine 386, leucine 390–alanine 413, proline 415–valine 440, cysteine 470–arginine 494, serine 496–proline 519, leucine 520–glutamate 543, proline 545–alanine 572, leucine 574–alanine 598, leucine 600–histidine 622, leucine 627–asparagine 650, proline 652–leucine 675, leucine 676–asparagine 699, threonine 701–leucine 723, alanine 724–serine 747, and alanine 749–aspartate 772. Asparagine 64 carries N-linked (GlcNAc...) asparagine glycosylation. Residues serine 72–histidine 77 and lysine 95–proline 109 each bind DNA. Cysteines 98 and 110 form a disulfide. Residue asparagine 129 is glycosylated (N-linked (GlcNAc...) asparagine). DNA is bound by residues tyrosine 132, arginine 152, and tyrosine 179–lysine 181. An intrachain disulfide couples cysteine 178 to cysteine 184. Asparagine 200 carries an N-linked (GlcNAc...) asparagine glycan. A DNA-binding site is contributed by tyrosine 208. Residues asparagine 210 and asparagine 242 are each glycosylated (N-linked (GlcNAc...) asparagine). Disulfide bonds link cysteine 255/cysteine 268 and cysteine 258/cysteine 265. The S-palmitoyl cysteine moiety is linked to residue cysteine 258. Arginine 262 is a binding site for DNA. Residue cysteine 265 is the site of S-palmitoyl cysteine attachment. N-linked (GlcNAc...) asparagine glycosylation occurs at asparagine 340. An intrachain disulfide couples cysteine 470 to cysteine 500. N-linked (GlcNAc...) asparagine glycans are attached at residues asparagine 474 and asparagine 513. Asparagine 567 is a glycosylation site (N-linked (GlcNAc...) asparagine). 3 N-linked (GlcNAc...) asparagine glycosylation sites follow: asparagine 669, asparagine 694, and asparagine 699. N-linked (GlcNAc...) asparagine glycosylation is present at asparagine 731. Cystine bridges form between cysteine 764–cysteine 790 and cysteine 766–cysteine 809. The helical transmembrane segment at cysteine 818 to leucine 838 threads the bilayer. Topologically, residues cysteine 839 to glutamate 1031 are cytoplasmic. Residues leucine 866 to leucine 1011 enclose the TIR domain.

The protein belongs to the Toll-like receptor family. Monomer and homodimer. Exists as a monomer in the absence of unmethylated cytidine-phosphate-guanosine (CpG) ligand. Proteolytic processing of an insertion loop (Z-loop) is required for homodimerization upon binding to the unmethylated CpG ligand leading to its activation. Interacts with MYD88 via their respective TIR domains. Interacts with BTK. Interacts (via transmembrane domain) with UNC93B1. Interacts with CD300LH; the interaction may promote full activation of TLR9-triggered innate responses. Interacts with CNPY3 and HSP90B1; this interaction is required for proper folding in the endoplasmic reticulum. Interacts with SMPDL3B. Interacts with CD82; this interaction is essential for TLR9-dependent myddosome formation in response to CpG stimulation. In terms of processing, activated by proteolytic cleavage of the flexible loop between repeats LRR14 and LRR15 within the ectodomain. Cleavage requires UNC93B1. Proteolytically processed by first removing the majority of the ectodomain by either asparagine endopeptidase (AEP) or a cathepsin followed by a trimming event that is solely cathepsin mediated and required for optimal receptor signaling. Post-translationally, palmitoylated by ZDHHC3 in the Golgi regulates TLR9 trafficking from the Golgi to endosomes. Depalmitoylation by PPT1 controls the release of TLR9 from UNC93B1 in endosomes.

It localises to the endoplasmic reticulum membrane. The protein resides in the endosome. It is found in the lysosome. Its subcellular location is the cytoplasmic vesicle. The protein localises to the phagosome. Functionally, key component of innate and adaptive immunity. TLRs (Toll-like receptors) control host immune response against pathogens through recognition of molecular patterns specific to microorganisms. TLR9 is a nucleotide-sensing TLR which is activated by unmethylated cytidine-phosphate-guanosine (CpG) dinucleotides. Acts via MYD88 and TRAF6, leading to NF-kappa-B activation, cytokine secretion and the inflammatory response. Upon CpG stimulation, induces B-cell proliferation, activation, survival and antibody production. The sequence is that of Toll-like receptor 9 (TLR9) from Felis catus (Cat).